We begin with the raw amino-acid sequence, 601 residues long: MSSLPNASQLDKSGRRIVVDPVTRIEGHMRCEVNVDANNIITNAVSTGTMWRGLEVILKGRDPRDAWAFVERICGVCTGTTRWTSVRAVEDALGIQIPYNAHLIRNLMDKQLQVQDHIVPFYHLLRLDWVNPVNALKADPKATSALPAALAAHAKSSPGYFRHVQTRLKKFVESGATACSPNGYWDNPAYQAPARPDLMAVAHYLEALDVQKDIVEIHTIFGGKNPHPNYMVGGVACAINLDDVGAAGGRSTCTSLNFVLERIHEAREFTRNVYLPDVLAVAGIYKDWLYGGGLPGHNLLSYGTFTKVPGDKSSDLLPAGAIVGGNWDEVLPVDVRVPEEIQEFVSHSWYRYADETKGLHPWDGVTEPKFELGPNTKGTRTNIKELDEAHKYSWIKARAWRGHAMEVGPLARYIIAYRSGREYVKEQVDRSLAAFNQSTGLNLGLKQFLPSTLGRTLARALECELAVDSMLDDWQALVGNIKAGDRATANVEKWDPSTWPKEAKGVGINEAPRGALGHWIRLKDGKIENYQAIVPTTWNGTPRDHLGNIGAYEAALLNTRMERPDEPVEILRTLHSFDPCLACSTHVMSPDGQELTRVKVR.

Ni(2+) is bound by residues Cys-74, Cys-77, Cys-580, and Cys-583.

This sequence belongs to the [NiFe]/[NiFeSe] hydrogenase large subunit family. As to quaternary structure, heterodimer of a large and a small subunit. Requires Ni(2+) as cofactor.

The protein localises to the cell membrane. It carries out the reaction H2 + A = AH2. In terms of biological role, this enzyme recycles the H(2) produced by nitrogenase to increase the production of ATP and to protect nitrogenase against inhibition or damage by O(2) under carbon- or phosphate-limited conditions. The protein is Uptake hydrogenase large subunit (hupL) of Azotobacter chroococcum mcd 1.